Here is a 537-residue protein sequence, read N- to C-terminus: Synaptotagmin-2 (537 aa).

Residues 1-2 (MG) are Cytoplasmic-facing. Residues 3–23 (IISTILGVIGFGFGTTIGIVI) form a helical membrane-spanning segment. Topologically, residues 24-537 (GYYLFIYFQS…QIELQWRNSS (514 aa)) are lumenal. The 183-residue stretch at 67-249 (DFDRIDWLNK…WPKTLNVQIM (183 aa)) folds into the SMP-LTD domain. Positions 227-505 (QEIIKDQVAN…TLGYVVINLG (279 aa)) are phospholipid binding. C2 domains are found at residues 240–362 (WPKT…LMTL) and 402–517 (DPNA…NDKY). Ca(2+) contacts are provided by Asp-276, Asp-282, Asp-332, and Glu-334.

Belongs to the synaptotagmin family. Ca(2+) serves as cofactor.

It localises to the golgi apparatus membrane. Its function is as follows. May play an important role in regulating an unconventional protein trafficking from the cytosol to the extracellular matrix. This is Synaptotagmin-2 (SYT2) from Arabidopsis thaliana (Mouse-ear cress).